A 390-amino-acid polypeptide reads, in one-letter code: UDP-galactose translocator (390 aa).

The disordered stretch occupies residues 1–24 (MAAVGVGGSTAAAGAGAVSSGALE). A run of 10 helical transmembrane segments spans residues 3–23 (AVGVGGSTAAAGAGAVSSGAL), 37–57 (YISLAVLVVQNASLILSIRYA), 65–85 (FFATTAVVMAEVLKGLTCLLL), 97–117 (LVLFLHEAVLVQYVDTLKLAV), 140–160 (TFQVTYQLKILTTALFSVLML), 169–189 (WASLLLLFTGVAIVQAQQAGG), 200–220 (GAGLAAVVASCLSSGFAGVYF), 238–258 (LGLFGTALGLVGLWWAEGTAV), 269–289 (PAVWGVVLNQAFGGLLVAVVV), and 315–335 (LFGFHLDPLFALGAGLVIGAV). Positions 9-22 (STAAAGAGAVSSGA) are enriched in low complexity. The segment at 356-390 (PCIHQQPPGQPPPPQLSSRGDLTTEPFLPKSVLVK) is disordered.

It belongs to the nucleotide-sugar transporter family. SLC35A subfamily. As to quaternary structure, interacts with SLC35A3; the interaction is reduced in the presence of SLC35A4. Found in a complex with SLC35A3 and SLC35A4.

It is found in the golgi apparatus membrane. It carries out the reaction UMP(out) + UDP-alpha-D-galactose(in) = UMP(in) + UDP-alpha-D-galactose(out). It catalyses the reaction UDP-N-acetyl-alpha-D-galactosamine(in) + UMP(out) = UDP-N-acetyl-alpha-D-galactosamine(out) + UMP(in). The catalysed reaction is UMP(out) + UDP-alpha-D-glucose(in) = UMP(in) + UDP-alpha-D-glucose(out). The enzyme catalyses UMP(out) + UDP-N-acetyl-alpha-D-glucosamine(in) = UMP(in) + UDP-N-acetyl-alpha-D-glucosamine(out). It carries out the reaction UDP-alpha-D-galactose(in) + AMP(out) = UDP-alpha-D-galactose(out) + AMP(in). It catalyses the reaction UDP-alpha-D-galactose(in) + CMP(out) = UDP-alpha-D-galactose(out) + CMP(in). The catalysed reaction is UDP-N-acetyl-alpha-D-galactosamine(out) + UDP-alpha-D-galactose(in) = UDP-N-acetyl-alpha-D-galactosamine(in) + UDP-alpha-D-galactose(out). The enzyme catalyses UDP-N-acetyl-alpha-D-glucosamine(out) + UDP-alpha-D-galactose(in) = UDP-N-acetyl-alpha-D-glucosamine(in) + UDP-alpha-D-galactose(out). It carries out the reaction UDP-alpha-D-galactose(in) + UDP-alpha-D-glucose(out) = UDP-alpha-D-galactose(out) + UDP-alpha-D-glucose(in). It catalyses the reaction UMP(out) + CMP(in) = UMP(in) + CMP(out). The catalysed reaction is UMP(out) + AMP(in) = UMP(in) + AMP(out). Transports uridine diphosphate galactose (UDP-galactose) from the cytosol into the Golgi apparatus. It functions as an antiporter that exchanges UDP-galactose for UMP. It is also able to exchange UDP-galactose for AMP and CMP, and to transport UDP-N-acetylgalactosamine (UDP-GalNAc) and other nucleotide sugars. As a provider of UDP-galactose to galactosyltransferases present in the Golgi apparatus, it is necessary for globotriaosylceramide/globoside (Gb3Cer) synthesis from lactosylceramide. The chain is UDP-galactose translocator from Mus musculus (Mouse).